A 696-amino-acid chain; its full sequence is Elongation factor G (696 aa).

In terms of domain architecture, tr-type G spans 8-290 (ERYRNIGIMA…AVLDYLPSPL (283 aa)). GTP contacts are provided by residues 17–24 (AHIDAGKT), 88–92 (DTPGH), and 142–145 (NKMD).

Belongs to the TRAFAC class translation factor GTPase superfamily. Classic translation factor GTPase family. EF-G/EF-2 subfamily.

The protein resides in the cytoplasm. Functionally, catalyzes the GTP-dependent ribosomal translocation step during translation elongation. During this step, the ribosome changes from the pre-translocational (PRE) to the post-translocational (POST) state as the newly formed A-site-bound peptidyl-tRNA and P-site-bound deacylated tRNA move to the P and E sites, respectively. Catalyzes the coordinated movement of the two tRNA molecules, the mRNA and conformational changes in the ribosome. In Nitrosomonas eutropha (strain DSM 101675 / C91 / Nm57), this protein is Elongation factor G.